The following is a 589-amino-acid chain: Protein OS-9 homolog (589 aa).

The first 21 residues, 1–21, serve as a signal peptide directing secretion; sequence MFSILNKLGIIWLALANISNC. N-linked (GlcNAc...) asparagine glycans are attached at residues Asn-17, Asn-61, and Asn-90. The MRH domain maps to 130 to 288; that stretch reads KDCVFAYGSN…VIGVPKLCSL (159 aa). Cys-132 and Cys-148 are disulfide-bonded. Residues Trp-143, Gln-155, Asp-241, Arg-247, Glu-270, and Tyr-276 each coordinate a mannooligosaccharide derivative. 2 cysteine pairs are disulfide-bonded: Cys-240-Cys-274 and Cys-255-Cys-286. N-linked (GlcNAc...) asparagine glycosylation is present at Asn-426. Residues 497–520 form a disordered region; sequence GKGSALDSTNNDKNNKATAENDKQ. Positions 509–519 are enriched in basic and acidic residues; it reads KNNKATAENDK. The Prevents secretion from ER signature appears at 586–589; sequence HDEL.

The protein belongs to the OS-9 family. In terms of assembly, interacts with missfolded ER lumenal proteins.

It localises to the endoplasmic reticulum membrane. Lectin involved in the quality control of the secretory pathway. As a member of the endoplasmic reticulum-associated degradation lumenal (ERAD-L) surveillance system, targets misfolded endoplasmic reticulum lumenal glycoproteins for degradation. The sequence is that of Protein OS-9 homolog (YOS9) from Debaryomyces hansenii (strain ATCC 36239 / CBS 767 / BCRC 21394 / JCM 1990 / NBRC 0083 / IGC 2968) (Yeast).